The sequence spans 89 residues: Small ribosomal subunit protein bS20 (89 aa).

Belongs to the bacterial ribosomal protein bS20 family.

Functionally, binds directly to 16S ribosomal RNA. In Xanthobacter autotrophicus (strain ATCC BAA-1158 / Py2), this protein is Small ribosomal subunit protein bS20.